Reading from the N-terminus, the 133-residue chain is S-adenosylmethionine decarboxylase proenzyme (133 aa).

Catalysis depends on Ser63, which acts as the Schiff-base intermediate with substrate; via pyruvic acid. At Ser63 the chain carries Pyruvic acid (Ser); by autocatalysis. His68 (proton acceptor; for processing activity) is an active-site residue. The Proton donor; for catalytic activity role is filled by Cys83.

Belongs to the prokaryotic AdoMetDC family. Type 1 subfamily. As to quaternary structure, heterotetramer of two alpha and two beta chains arranged as a dimer of alpha/beta heterodimers. Requires pyruvate as cofactor. In terms of processing, is synthesized initially as an inactive proenzyme. Formation of the active enzyme involves a self-maturation process in which the active site pyruvoyl group is generated from an internal serine residue via an autocatalytic post-translational modification. Two non-identical subunits are generated from the proenzyme in this reaction, and the pyruvate is formed at the N-terminus of the alpha chain, which is derived from the carboxyl end of the proenzyme. The post-translation cleavage follows an unusual pathway, termed non-hydrolytic serinolysis, in which the side chain hydroxyl group of the serine supplies its oxygen atom to form the C-terminus of the beta chain, while the remainder of the serine residue undergoes an oxidative deamination to produce ammonia and the pyruvoyl group blocking the N-terminus of the alpha chain.

The catalysed reaction is S-adenosyl-L-methionine + H(+) = S-adenosyl 3-(methylsulfanyl)propylamine + CO2. It participates in amine and polyamine biosynthesis; S-adenosylmethioninamine biosynthesis; S-adenosylmethioninamine from S-adenosyl-L-methionine: step 1/1. Its function is as follows. Catalyzes the decarboxylation of S-adenosylmethionine to S-adenosylmethioninamine (dcAdoMet), the propylamine donor required for the synthesis of the polyamines spermine and spermidine from the diamine putrescine. The polypeptide is S-adenosylmethionine decarboxylase proenzyme (Acidithiobacillus ferrooxidans (strain ATCC 23270 / DSM 14882 / CIP 104768 / NCIMB 8455) (Ferrobacillus ferrooxidans (strain ATCC 23270))).